A 124-amino-acid polypeptide reads, in one-letter code: Probable cytochrome b5 1 (124 aa).

Residues 3–79 (VKYFEPEEIV…LEEMYIGDLK (77 aa)) enclose the Cytochrome b5 heme-binding domain. Heme-binding residues include histidine 38 and histidine 62. Residues 100-120 (PPLPLLIALIVLPAIAVIVFV) traverse the membrane as a helical segment.

Belongs to the cytochrome b5 family.

The protein localises to the endoplasmic reticulum membrane. It localises to the microsome membrane. Its function is as follows. Membrane bound hemoprotein which function as an electron carrier for several membrane bound oxygenases. This Schizosaccharomyces pombe (strain 972 / ATCC 24843) (Fission yeast) protein is Probable cytochrome b5 1.